The primary structure comprises 186 residues: uncharacterized protein (186 aa).

The first 21 residues, 1 to 21 (MIHVKYIILGFIMVSSLNLYA), serve as a signal peptide directing secretion.

This is an uncharacterized protein from Rickettsia conorii (strain ATCC VR-613 / Malish 7).